The sequence spans 258 residues: Large ribosomal subunit protein bL28m (258 aa).

The N-terminal 21 residues, 1–21 (MQKIFRPFQLTRGFTSSVKNF), are a transit peptide targeting the mitochondrion.

The protein belongs to the bacterial ribosomal protein bL28 family. Component of the mitochondrial large ribosomal subunit (mt-LSU). Mature yeast 74S mitochondrial ribosomes consist of a small (37S) and a large (54S) subunit. The 37S small subunit contains a 15S ribosomal RNA (15S mt-rRNA) and 34 different proteins. The 54S large subunit contains a 21S rRNA (21S mt-rRNA) and 46 different proteins.

It is found in the mitochondrion. Component of the mitochondrial ribosome (mitoribosome), a dedicated translation machinery responsible for the synthesis of mitochondrial genome-encoded proteins, including at least some of the essential transmembrane subunits of the mitochondrial respiratory chain. The mitoribosomes are attached to the mitochondrial inner membrane and translation products are cotranslationally integrated into the membrane. The protein is Large ribosomal subunit protein bL28m (MRPL24) of Saccharomyces cerevisiae (strain ATCC 204508 / S288c) (Baker's yeast).